The chain runs to 180 residues: Major urinary protein 1 (180 aa).

The signal sequence occupies residues 1–18; sequence MKMLLLLCLGLTLVCVHA. Residues cysteine 82 and cysteine 175 are joined by a disulfide bond.

This sequence belongs to the calycin superfamily. Lipocalin family. In terms of tissue distribution, abundant in the urine of adult male mice but absent from that of females.

The protein resides in the secreted. Functionally, binds pheromones that are released from drying urine of males. These pheromones affect the sexual behavior of females. The chain is Major urinary protein 1 (Mup1) from Mus musculus (Mouse).